Here is an 86-residue protein sequence, read N- to C-terminus: Ferredoxin-like protein YgcO (86 aa).

Residues 45 to 74 (GNLRIDYRSCLECGTCRLLCDESTLQQWRY) enclose the 4Fe-4S ferredoxin-type domain.

It belongs to the bacterial-type ferredoxin family. FixX subfamily.

Its function is as follows. Could be a 3Fe-4S cluster-containing protein. Probably participates in a redox process with YgcN, YgcQ and YgcR. The protein is Ferredoxin-like protein YgcO (ygcO) of Escherichia coli (strain K12).